We begin with the raw amino-acid sequence, 160 residues long: Calcium and integrin-binding family member 3 (160 aa).

EF-hand domains are found at residues 39 to 74, 76 to 111, and 117 to 152; these read KDNP…MSEM, PRDL…LTRG, and EVTL…APDF. Ca(2+) is bound by residues Asp89, Asn91, Asp93, Tyr95, Asp100, Asp130, Asp132, Asp134, Arg136, and Asp141.

Monomer and homodimer. Interacts with ITGA2B (via C-terminus cytoplasmic tail region); the interaction is stabilized/increased in a calcium and magnesium-dependent manner. Interacts with TMC1. Expressed in heart, liver and inner ear. In the inner ear, expressed in vestibule and basilar membrane cells. Expressed in megakaryocytes and endothelial cells.

Functionally, acts as an auxiliary subunit of the sensory mechanoelectrical transduction (MET) channel in hair cells. Plays a role in regulating hair cell MET channel localization and function. This Mus musculus (Mouse) protein is Calcium and integrin-binding family member 3 (Cib3).